The primary structure comprises 112 residues: MKKIEAIIRPFKLNEVKLALVKEGIGGMTVIKVSGFGRQKGQTERYKGSEYSIDIIDKIKIEIIISDDKVEKIVETIIKASKTGEIGDGKIFISSIERVIRIRTNDLNFEAL.

Tyr-51 carries the post-translational modification O-UMP-tyrosine.

Belongs to the P(II) protein family. Homotrimer.

Its subcellular location is the plastid. It localises to the chloroplast. Functionally, P-II indirectly controls the transcription of the glutamine synthetase gene (glnA). P-II prevents NR-II-catalyzed conversion of NR-I to NR-I-phosphate, the transcriptional activator of glnA. When P-II is uridylylated to P-II-UMP, these events are reversed. When the ratio of Gln to 2-ketoglutarate decreases, P-II is uridylylated to P-II-UMP, which causes the deadenylation of glutamine synthetase, so activating the enzyme. This chain is Nitrogen regulatory protein P-II (glnB), found in Pyropia yezoensis (Susabi-nori).